Reading from the N-terminus, the 332-residue chain is Phenylalanine--tRNA ligase alpha subunit (332 aa).

E252 contributes to the Mg(2+) binding site.

It belongs to the class-II aminoacyl-tRNA synthetase family. Phe-tRNA synthetase alpha subunit type 1 subfamily. In terms of assembly, tetramer of two alpha and two beta subunits. Requires Mg(2+) as cofactor.

It is found in the cytoplasm. It catalyses the reaction tRNA(Phe) + L-phenylalanine + ATP = L-phenylalanyl-tRNA(Phe) + AMP + diphosphate + H(+). This Marinobacter nauticus (strain ATCC 700491 / DSM 11845 / VT8) (Marinobacter aquaeolei) protein is Phenylalanine--tRNA ligase alpha subunit.